Reading from the N-terminus, the 65-residue chain is Large ribosomal subunit protein bL35 (65 aa).

A disordered region spans residues 1–22 (MPKIKTVRGAAKRFKKTGSGGF). A compositionally biased stretch (basic residues) spans 10 to 22 (AAKRFKKTGSGGF).

It belongs to the bacterial ribosomal protein bL35 family.

This chain is Large ribosomal subunit protein bL35, found in Serratia proteamaculans (strain 568).